Here is an 830-residue protein sequence, read N- to C-terminus: FYN-binding protein 1 (830 aa).

The disordered stretch occupies residues Met-1–Lys-501. Residue Lys-13 is modified to N6-acetyllysine. The segment covering Asn-15–Ala-55 has biased composition (polar residues). A phosphoserine mark is found at Ser-38 and Ser-56. The segment covering Thr-79–Lys-89 has biased composition (basic and acidic residues). Ser-233 carries the phosphoserine modification. Basic and acidic residues-rich tracts occupy residues Pro-248 to Gly-259 and Asn-284 to Ile-296. Ser-329 is subject to Phosphoserine. Residues Gln-330–Ala-339 show a composition bias toward basic and acidic residues. Pro residues-rich tracts occupy residues Lys-344–Pro-362 and Leu-391–Ala-407. Residues Pro-347 to Thr-447 form an interaction with SKAP1 region. Residues Leu-450–Ile-464 are compositionally biased toward acidic residues. Position 456 is a phosphoserine (Ser-456). The SH2-binding motif lies at Tyr-461 to Ile-464. Positions Glu-465 to Arg-500 are enriched in basic and acidic residues. Positions Glu-465–Lys-502 form a coiled coil. Residues Lys-479–Arg-486 carry the Nuclear localization signal motif. One can recognise an SH3 1 domain in the interval Gln-510–Asp-571. Phosphotyrosine is present on Tyr-570. Ser-572 carries the post-translational modification Phosphoserine. The SH2-binding; to LCP2 signature appears at Tyr-595–Val-598. Disordered stretches follow at residues Gln-601–Thr-646 and Lys-660–Glu-739. Over residues Ala-621–Asp-636 the composition is skewed to acidic residues. The short motif at Tyr-626–Ile-629 is the SH2-binding; to FYN element. The segment covering Lys-660–Glu-675 has biased composition (basic and acidic residues). The span at Val-693–Ala-703 shows a compositional bias: acidic residues. Tyr-698 carries the phosphotyrosine modification. Over residues Thr-722 to Glu-739 the composition is skewed to basic and acidic residues. The Nuclear localization signal signature appears at Leu-732–Glu-739. Residues Lys-747 to Gly-815 enclose the SH3 2 domain.

As to quaternary structure, part of a complex consisting of SKAP2, FYB1 and PTPNS1. Part of a complex consisting of SKAP2, FYB1 and LILRB3. Part of a complex consisting of SKAP1, FYB1 and CLNK. Interacts with CLNK (via its SH2 domain) and FYN; this interaction allows SKAP1 and FYB1 to recruit FYN to the complex, thus promoting the phosphorylation of CLNK by FYN. Interacts with FYN. Interacts with LCP2. Interacts with SKAP1. Interacts with SKAP2. Interacts with FASLG. Interacts with EVL. Interacts with TMEM47. Interacts with LCK. T-cell receptor ligation leads to increased tyrosine phosphorylation.

It is found in the cytoplasm. The protein localises to the nucleus. Its subcellular location is the cell junction. Functionally, acts as an adapter protein of the FYN and LCP2 signaling cascades in T-cells. May play a role in linking T-cell signaling to remodeling of the actin cytoskeleton. Modulates the expression of IL2. Involved in platelet activation. Prevents the degradation of SKAP1 and SKAP2. May be involved in high affinity immunoglobulin epsilon receptor signaling in mast cells. This is FYN-binding protein 1 from Rattus norvegicus (Rat).